The sequence spans 105 residues: Prothymosin alpha-A (105 aa).

The segment covering 1–30 (MADTKVDTSKEVSAKDLKEKKQVEEAENGK) has biased composition (basic and acidic residues). Residues 1 to 105 (MADTKVDTSK…VDPKKQKTDV (105 aa)) form a disordered region. Composition is skewed to acidic residues over residues 39–78 (ENEENGDQENEVDEEDDDVAEEDEEDDGEGDDDDEDEEAE) and 87–96 (EDDDDDEDDV).

Belongs to the pro/parathymosin family. At the 20-somite stage (18 hpf), expressed on the dorsal side of the embryo in the developing central and peripheral nervous system (CNS and PNS), in the tail bud and the pronephric ducts. In the PNS, expressed in the otic vesicle, trigeminal ganglion and the anterior lateral line placode. Localized throughout the hindbrain, with highest expression in rhombomeres 3 and 4. In the head, expressed in the olfactory placode and in the diencephalic region. At the end of the segmentation period (20 hpf), expression begins in the newly forming endodermal pouches, and weakly in the pharyngeal arch precursor cells. During the early pharyngula period, expressed in the pectoral fin bud, the developing retina, and still present in the central nervous system and endodermal pouches. In the tail, expressed in the spinal cord and posterior lateral line precursors. Weakly expressed in the pronephric ducts, only in the corpuscles of Stanius. At 48 hpf, still expressed in the retina and brain, where expression is almost uniform. At this stage, expression is decreased in the spinal cord and is absent from the lateral line cells and pronephric ducts, but appears in the intestine and continues in the pharyngeal arches. In 72 hpf embryos, expression in the brain remains uniform but is restricted to amacrine cells in the retina. In the pharyngeal arches, expression continues to be limited to the ectodermal and endodermal covering cells.

Its subcellular location is the nucleus. The polypeptide is Prothymosin alpha-A (ptmaa) (Danio rerio (Zebrafish)).